The sequence spans 422 residues: Metallocarboxypeptidase A (422 aa).

The signal sequence occupies residues 1–17 (MRSVLSLALLAANVVTA). The propeptide at 18–112 (AVVSPFDYSG…FEAYSAGYAP (95 aa)) is activation peptide. One can recognise a Peptidase M14 domain in the interval 119-419 (SYHSYQDHIS…AGTVAMLKAV (301 aa)). Histidine 179 and glutamate 182 together coordinate Zn(2+). Substrate contacts are provided by residues 179 to 182 (HARE), arginine 237, and 254 to 255 (NR). Cysteine 248 and cysteine 271 are oxidised to a cystine. Zn(2+) is bound at residue histidine 309. Residue 310 to 311 (SY) participates in substrate binding. The active-site Proton donor/acceptor is glutamate 385.

It belongs to the peptidase M14 family. Requires Zn(2+) as cofactor.

The protein localises to the secreted. Its function is as follows. Extracellular metalloprotease that contributes to pathogenicity. This is Metallocarboxypeptidase A (MCPA) from Trichophyton tonsurans (Scalp ringworm fungus).